A 220-amino-acid chain; its full sequence is MPTNSQDTTVLHALFGGTFDPIHYGHLRPVEALAAEAGLNRVTLLPNHVPPHRPQPEANAQQRLKMVELAIAGNPLFAVDDRELHRTTPSYTIETLEAIRKERGAALPLAFIIGQDSLLTLHKWHRWQSLLDTCHLLVLARPGYNDRMDTPELQQWLEQHQVTDAALLSRQPQGYIYLADTPQLEISATEIRQRRHQGLNCDDLLPRSVQRYIELQGLYR.

The protein belongs to the NadD family.

The catalysed reaction is nicotinate beta-D-ribonucleotide + ATP + H(+) = deamido-NAD(+) + diphosphate. Its pathway is cofactor biosynthesis; NAD(+) biosynthesis; deamido-NAD(+) from nicotinate D-ribonucleotide: step 1/1. In terms of biological role, catalyzes the reversible adenylation of nicotinate mononucleotide (NaMN) to nicotinic acid adenine dinucleotide (NaAD). This is Probable nicotinate-nucleotide adenylyltransferase from Serratia proteamaculans (strain 568).